The chain runs to 331 residues: Vitamin B12 import system permease protein BtuC (331 aa).

9 helical membrane-spanning segments follow: residues 20–42, 62–84, 91–113, 117–136, 148–170, 190–209, 240–262, 277–296, and 303–325; these read VMLA…FLSP, LVAA…VLLG, GVLG…LPVM, TVFM…ILVG, MLLV…FYFS, SWHH…WLCL, LAIS…VGLV, FLLP…SDIW, and SAEL…WMLI.

It belongs to the binding-protein-dependent transport system permease family. FecCD subfamily. The complex is composed of two ATP-binding proteins (BtuD), two transmembrane proteins (BtuC) and a solute-binding protein (BtuF).

The protein localises to the cell inner membrane. Functionally, part of the ABC transporter complex BtuCDF involved in vitamin B12 import. Involved in the translocation of the substrate across the membrane. The protein is Vitamin B12 import system permease protein BtuC of Vibrio vulnificus (strain CMCP6).